The chain runs to 134 residues: Protein YhfA (134 aa).

The protein is Protein YhfA (yhfA) of Escherichia coli O157:H7.